Here is a 400-residue protein sequence, read N- to C-terminus: MSDKLVLVLNCGSSSLKFAIIDAQSGDDKVSGLAECFGLEDSRIKWKFDGGKNEAKLGAFTAHREAVEFIVNNILAEHPELAAQIKAVGHRIVHGGEKFTRSVIVTPEVIQGIEDCASLAPLHNPAHLIGIRAALASFPALPQVAVFDTAFHQTMPEKAYIYALPYKLYREHSIRRYGMHGTSNIYICREAAKVLGKETKDTNIICAHLGNGASVTAIKDGKSVDTSMGLTPLEGLVMGTRCGDLDPSIIFHLVKQLGYTLDEVNNLLNKQSGLLGISELTNDCRGIEEGYQDGHKGATLALDIFCYRLAKYIASYTVPLGRLDAIIFTGGIGENSDLIREKVLNLLAIFNFKVDDNLNKAARFGQQGIITQVGSPIAMVIPTNEEWVIAEDAIKLITAK.

Mg(2+) is bound at residue asparagine 10. ATP is bound at residue lysine 17. Residue arginine 91 coordinates substrate. Residue aspartate 148 is the Proton donor/acceptor of the active site. ATP is bound by residues 208-212 (HLGNG), 283-285 (DCR), and 331-335 (GIGEN). Glutamate 385 lines the Mg(2+) pocket.

It belongs to the acetokinase family. Homodimer. The cofactor is Mg(2+). Mn(2+) serves as cofactor.

The protein localises to the cytoplasm. The catalysed reaction is acetate + ATP = acetyl phosphate + ADP. It functions in the pathway metabolic intermediate biosynthesis; acetyl-CoA biosynthesis; acetyl-CoA from acetate: step 1/2. Functionally, catalyzes the formation of acetyl phosphate from acetate and ATP. Can also catalyze the reverse reaction. The chain is Acetate kinase from Shewanella frigidimarina (strain NCIMB 400).